Here is a 247-residue protein sequence, read N- to C-terminus: Carboxy-S-adenosyl-L-methionine synthase (247 aa).

Residues tyrosine 40, 65-67 (GSS), 90-91 (DN), 122-123 (DI), asparagine 137, and arginine 204 contribute to the S-adenosyl-L-methionine site.

The protein belongs to the class I-like SAM-binding methyltransferase superfamily. Cx-SAM synthase family. In terms of assembly, homodimer.

It carries out the reaction prephenate + S-adenosyl-L-methionine = carboxy-S-adenosyl-L-methionine + 3-phenylpyruvate + H2O. Catalyzes the conversion of S-adenosyl-L-methionine (SAM) to carboxy-S-adenosyl-L-methionine (Cx-SAM). The sequence is that of Carboxy-S-adenosyl-L-methionine synthase from Pseudomonas syringae pv. syringae (strain B728a).